The following is a 722-amino-acid chain: Tegument protein UL46 (722 aa).

The interval 423–534 (RLAASGPPGG…AAAARPLAAQ (112 aa)) is disordered. Basic and acidic residues-rich tracts occupy residues 440-451 (CRDKIQRTRRDN) and 474-491 (HRED…DRGP). Pro residues predominate over residues 510–522 (PRLPPRNPAPPEQ). Residues 523 to 534 (RPAAAARPLAAQ) show a composition bias toward low complexity.

The protein belongs to the herpesviridae HHV-1 VP11/12 protein family. In terms of assembly, interacts with VP16. Interacts with host LCK, PIK3R1, SHC1 AND GRB2; these interactions promote the activation of the PI3K/AKT pathway. Interacts with host YWHAB. Interacts with ICP0; this interaction targets UL46 for degradation by the proteasome. Post-translationally, phosphorylated by host LCK. The phosphorylation seems to be lymphocyte-specific.

Its subcellular location is the virion tegument. It is found in the host cell membrane. Plays a role in the activation of the host PI3K/AKT pathway to promote cell survival. Interacts with and activates host LCK and thereby recruits downstream partners SHC1, GRB2 and PI3KR1 in order to activate the PI3K pathway by phosphorylating host AKT on its activating residues. This mechanism is inhibited by the viral protein US3 that instead promotes incorporation of UL46 into virions. In Homo sapiens (Human), this protein is Tegument protein UL46.